The sequence spans 357 residues: Histidinol-phosphate aminotransferase (357 aa).

At lysine 222 the chain carries N6-(pyridoxal phosphate)lysine.

It belongs to the class-II pyridoxal-phosphate-dependent aminotransferase family. Histidinol-phosphate aminotransferase subfamily. In terms of assembly, homodimer. Requires pyridoxal 5'-phosphate as cofactor.

It catalyses the reaction L-histidinol phosphate + 2-oxoglutarate = 3-(imidazol-4-yl)-2-oxopropyl phosphate + L-glutamate. It participates in amino-acid biosynthesis; L-histidine biosynthesis; L-histidine from 5-phospho-alpha-D-ribose 1-diphosphate: step 7/9. This is Histidinol-phosphate aminotransferase from Leuconostoc mesenteroides subsp. mesenteroides (strain ATCC 8293 / DSM 20343 / BCRC 11652 / CCM 1803 / JCM 6124 / NCDO 523 / NBRC 100496 / NCIMB 8023 / NCTC 12954 / NRRL B-1118 / 37Y).